The primary structure comprises 74 residues: Large ribosomal subunit protein bL31 (74 aa).

Residues cysteine 17, cysteine 19, cysteine 38, and cysteine 41 each contribute to the Zn(2+) site.

The protein belongs to the bacterial ribosomal protein bL31 family. Type A subfamily. In terms of assembly, part of the 50S ribosomal subunit. Zn(2+) serves as cofactor.

Functionally, binds the 23S rRNA. This is Large ribosomal subunit protein bL31 from Gloeobacter violaceus (strain ATCC 29082 / PCC 7421).